A 112-amino-acid polypeptide reads, in one-letter code: Conotoxin vil14.5 (112 aa).

A signal peptide spans 1–22 (MGFRVLVLVVMATTSALPFTFS). Positions 23–85 (EEPGRSPFRP…FAELSVGQRR (63 aa)) are excised as a propeptide. The disordered stretch occupies residues 53 to 74 (RADGQPPDMRQPEMRRPEVRQP). The span at 62-74 (RQPEMRRPEVRQP) shows a compositional bias: basic and acidic residues. 2 disulfide bridges follow: cysteine 91–cysteine 111 and cysteine 95–cysteine 107.

Belongs to the conotoxin R superfamily. In terms of tissue distribution, expressed by the venom duct.

The protein resides in the secreted. In Conus villepinii (Villepin's cone), this protein is Conotoxin vil14.5.